The primary structure comprises 305 residues: Ribosomal RNA small subunit methyltransferase H (305 aa).

S-adenosyl-L-methionine-binding positions include Gly47–His49, Asp66, Phe93, Asp108, and Gln115. The interval Ala279 to Glu305 is disordered. Over residues Arg291–Glu305 the composition is skewed to basic residues.

It belongs to the methyltransferase superfamily. RsmH family.

It is found in the cytoplasm. The enzyme catalyses cytidine(1402) in 16S rRNA + S-adenosyl-L-methionine = N(4)-methylcytidine(1402) in 16S rRNA + S-adenosyl-L-homocysteine + H(+). In terms of biological role, specifically methylates the N4 position of cytidine in position 1402 (C1402) of 16S rRNA. The polypeptide is Ribosomal RNA small subunit methyltransferase H (Prochlorococcus marinus (strain SARG / CCMP1375 / SS120)).